Here is a 95-residue protein sequence, read N- to C-terminus: Large ribosomal subunit protein bL25 (95 aa).

This sequence belongs to the bacterial ribosomal protein bL25 family. In terms of assembly, part of the 50S ribosomal subunit; part of the 5S rRNA/L5/L18/L25 subcomplex. Contacts the 5S rRNA. Binds to the 5S rRNA independently of L5 and L18.

Its function is as follows. This is one of the proteins that binds to the 5S RNA in the ribosome where it forms part of the central protuberance. The chain is Large ribosomal subunit protein bL25 from Glaesserella parasuis serovar 5 (strain SH0165) (Haemophilus parasuis).